A 283-amino-acid chain; its full sequence is Pantothenate synthetase (283 aa).

ATP is bound at residue 31 to 38 (MGALHDGH). His38 functions as the Proton donor in the catalytic mechanism. Gln62 lines the (R)-pantoate pocket. Residue Gln62 coordinates beta-alanine. 148–151 (GKKD) is a binding site for ATP. Gln154 contributes to the (R)-pantoate binding site. ATP contacts are provided by residues Val177 and 185-188 (KSSR).

Belongs to the pantothenate synthetase family. As to quaternary structure, homodimer.

The protein resides in the cytoplasm. It catalyses the reaction (R)-pantoate + beta-alanine + ATP = (R)-pantothenate + AMP + diphosphate + H(+). Its pathway is cofactor biosynthesis; (R)-pantothenate biosynthesis; (R)-pantothenate from (R)-pantoate and beta-alanine: step 1/1. Functionally, catalyzes the condensation of pantoate with beta-alanine in an ATP-dependent reaction via a pantoyl-adenylate intermediate. The protein is Pantothenate synthetase of Staphylococcus aureus (strain Mu3 / ATCC 700698).